A 415-amino-acid chain; its full sequence is Actin-like protein 7B (415 aa).

Residues 1–35 (MATRNSPMALGTAQGDPGEAGTRPGSDAGLRDTGA) form a disordered region. Ser6 carries the post-translational modification Phosphoserine.

It belongs to the actin family.

The protein localises to the cytoplasm. It localises to the cytoskeleton. In Macaca fascicularis (Crab-eating macaque), this protein is Actin-like protein 7B (ACTL7B).